The primary structure comprises 948 residues: MDKSSTMLVHYDKGTPAVANEIKEALEGNDVEAKVDAMKKAIMLLLNGETIPQLFITIIRYVLPSEDHTIQKLLLLYLELIEKTDSKGKVLPEMILICQNLRNNLQHPNEYIRGVTLRFLCRMKETEIVEPLTPSVLQNLEHRHPFVRRNAILAIMSIYKLPHGDQLFVDAPEMIEKVLSTEQDPSAKRNAFLMLFTCAEERAVNYLLSNVDKVSDWNESLQMVVLELIRSVCKTKPAEKGKYIKIIISLLSATSSAVIYECAGTLVSLSSAPTAIRAAANTYCQLLLSQSDNNVKLILLDRLYELKTLHRDIMVELIIDVLRALSSPNLDIRRKTLDIALDLITHHNINEVVQMLKKEVVKTQSGELEKNGEYRQMLIQAIHACAVKFPEVASTVVHLLMDFLGDSNVASALDVVVFVREIIETNPKLRVSIITRLLDTFYQIRAGKVCPCALWIIGEYCLSLSEVESGISTITQCLGELPFYSVSEESEPTETSKKIQPTSSAMVSSRKPVILADGTYATQSAASETTFSSPTVVQGSLTSGNLRALLLTGDFFLGAVVACTLTKLVLRLEEVQSSKTEVNKTVSQALLIMVSILQLGQSPVSPHPIDNDSYERIMLCIKLLCHRNVEMKKIWLESCRQSFVKMISEKQLREMEELKAKTQTTHAQPDDLIDFFHLKSRKGMSQLELEDQVQDDLKRATGEFTKDENDANKLNRILQLTGFSDPVYAEAYVTVHHYDIALEVTVINRTKETLQNLCLELATMGDLKLVERPQNYSLAPERSMQIKANIKVSSTETGVIFGNIVYETSNVMERNVVVLNDIHIDIMDYISPAVCSEVAFRTMWAEFEWENKVAVNTTIQNEREFLDHIIKSTNMKCLTAPSAIAGECGFLAANLYAKSVFGEDALVNLSIEKQTDGTLSGYIRIRSKTQGIALSLGDKITLKQKGGS.

6 HEAT repeats span residues 49–87, 92–126, 127–164, 274–311, 312–349, and 391–428; these read ETIP…TDSK, PEMI…MKET, EIVE…LPHG, TAIR…TLHR, DIMV…HHNI, and EVAS…TNPK.

In terms of assembly, oligomeric complex that consists of at least the alpha, beta, beta', gamma, delta, epsilon and zeta subunits.

It localises to the cytoplasm. The protein localises to the golgi apparatus membrane. It is found in the cytoplasmic vesicle. Its subcellular location is the COPI-coated vesicle membrane. In terms of biological role, the coatomer is a cytosolic protein complex that binds to dilysine motifs and reversibly associates with Golgi non-clathrin-coated vesicles, which further mediate biosynthetic protein transport from the ER, via the Golgi up to the trans Golgi network. Coatomer complex is required for budding from Golgi membranes, and is essential for the retrograde Golgi-to-ER transport of dilysine-tagged proteins. The protein is Coatomer subunit beta-2 of Arabidopsis thaliana (Mouse-ear cress).